The primary structure comprises 187 residues: Large ribosomal subunit protein bL9 (187 aa).

Residues 155-187 are disordered; sequence AQRGGMVTGLREEDEEEEVEETATEEGGEETAA. A compositionally biased stretch (acidic residues) spans 166–187; that stretch reads EEDEEEEVEETATEEGGEETAA.

The protein belongs to the bacterial ribosomal protein bL9 family.

Its function is as follows. Binds to the 23S rRNA. The protein is Large ribosomal subunit protein bL9 of Rhodospirillum centenum (strain ATCC 51521 / SW).